The following is a 23-amino-acid chain: Ascaphin-1 (23 aa).

Asn23 is subject to Asparagine amide.

Expressed by the skin glands.

Its subcellular location is the secreted. In terms of biological role, antimicrobial peptide that shows higher potency against Gram-negative bacteria than against Gram-positive bacteria. Has a very week hemolytic activity. The chain is Ascaphin-1 from Ascaphus truei (Coastal tailed frog).